The primary structure comprises 396 residues: Pinosylvin synthase 2 (396 aa).

K60–R63 lines the substrate pocket. Residue C170 is part of the active site. Residues L273 and G311–R313 contribute to the substrate site.

It belongs to the thiolase-like superfamily. Chalcone/stilbene synthases family. As to quaternary structure, homodimer.

Its subcellular location is the cytoplasm. The catalysed reaction is (E)-cinnamoyl-CoA + 3 malonyl-CoA + 3 H(+) = (E)-pinosylvin + 4 CO2 + 4 CoA. It catalyses the reaction 3-phenylpropanoyl-CoA + 3 malonyl-CoA + 3 H(+) = dihydropinosylvin + 4 CO2 + 4 CoA. It participates in phytoalexin biosynthesis; pinosylvin biosynthesis. Functionally, catalyzes the production of pinosylvin from cinnamoyl-CoA and malonyl-CoA, and dihydropinosylvin from dihydrocinnamoyl-CoA. The polypeptide is Pinosylvin synthase 2 (Pinus strobus (Eastern white pine)).